A 782-amino-acid chain; its full sequence is Transcription factor Sp4 (782 aa).

Disordered regions lie at residues 1–48 (MSDQ…PLAL), 107–148 (PPAS…TPNQ), and 275–385 (GGGT…QNAQ). Ser44 is modified (phosphoserine). Residues 107–119 (PPASKENNVSQPA) show a composition bias toward polar residues. Composition is skewed to low complexity over residues 120 to 146 (SSSS…PSTP) and 281 to 342 (VGQP…SADT). Residues 344 to 354 (QYASTSASSSE) show a composition bias toward polar residues. Positions 364–378 (AATESEAQSSSQLQS) are enriched in low complexity. The short motif at 465-473 (ISWQTVQVQ) is the 9aaTAD; inactive element. 3 consecutive C2H2-type zinc fingers follow at residues 645–669 (HVCH…LRWH), 675–699 (FICN…RRTH), and 705–727 (FECP…VKTH).

It belongs to the Sp1 C2H2-type zinc-finger protein family. In terms of tissue distribution, expressed in many tissues.

It localises to the nucleus. In terms of biological role, binds to GT and GC boxes promoters elements. Probable transcriptional activator. Required for normal male reproductive behavior. This Mus musculus (Mouse) protein is Transcription factor Sp4 (Sp4).